Reading from the N-terminus, the 188-residue chain is Adenine phosphoribosyltransferase (188 aa).

The protein belongs to the purine/pyrimidine phosphoribosyltransferase family. Homodimer.

It localises to the cytoplasm. It carries out the reaction AMP + diphosphate = 5-phospho-alpha-D-ribose 1-diphosphate + adenine. It participates in purine metabolism; AMP biosynthesis via salvage pathway; AMP from adenine: step 1/1. Its function is as follows. Catalyzes a salvage reaction resulting in the formation of AMP, that is energically less costly than de novo synthesis. The chain is Adenine phosphoribosyltransferase from Paraburkholderia phymatum (strain DSM 17167 / CIP 108236 / LMG 21445 / STM815) (Burkholderia phymatum).